We begin with the raw amino-acid sequence, 1342 residues long: DNA-directed RNA polymerase subunit beta (1342 aa).

It belongs to the RNA polymerase beta chain family. As to quaternary structure, the RNAP catalytic core consists of 2 alpha, 1 beta, 1 beta' and 1 omega subunit. When a sigma factor is associated with the core the holoenzyme is formed, which can initiate transcription.

It carries out the reaction RNA(n) + a ribonucleoside 5'-triphosphate = RNA(n+1) + diphosphate. In terms of biological role, DNA-dependent RNA polymerase catalyzes the transcription of DNA into RNA using the four ribonucleoside triphosphates as substrates. The sequence is that of DNA-directed RNA polymerase subunit beta from Erwinia tasmaniensis (strain DSM 17950 / CFBP 7177 / CIP 109463 / NCPPB 4357 / Et1/99).